The primary structure comprises 274 residues: MRLYTQVVAASLVATLAIVDSKVSNAIAGQGNNLRFLRQDNATVARVSEDGERGGLLADEKDIMAIADHLIRLNYSLSYARKVLGKFANYEYAIAKVEEKIKKRTVSYMFLDEKFLTQEEAEGKFIEWILEGKTQEQLEREFDIFTRPESKRAKKIQEVNKFAIRAYLDWLRNLRARSFRMTMMEYTNPSNAFATFDRHGHSRNKILSMFDAWVAKGTLLDVVKDRLGFNKPMKPADMFHSDNFVAYATYAQMLREKNNSLRPPRLDSVSTPSN.

Positions methionine 1–serine 21 are cleaved as a signal peptide. Positions arginine 35–arginine 53 match the RxLR-dEER motif. Asparagine 41, asparagine 74, and asparagine 258 each carry an N-linked (GlcNAc...) asparagine glycan.

It belongs to the RxLR effector family.

The protein localises to the secreted. It localises to the host nucleus. It is found in the host cytoplasm. Functionally, secreted effector that completely suppresses the host cell death induced by cell death-inducing proteins. The sequence is that of Secreted RxLR effector protein 40 from Plasmopara viticola (Downy mildew of grapevine).